The chain runs to 105 residues: Large ribosomal subunit protein uL24 (105 aa).

The protein belongs to the universal ribosomal protein uL24 family. In terms of assembly, part of the 50S ribosomal subunit.

One of two assembly initiator proteins, it binds directly to the 5'-end of the 23S rRNA, where it nucleates assembly of the 50S subunit. Functionally, one of the proteins that surrounds the polypeptide exit tunnel on the outside of the subunit. This is Large ribosomal subunit protein uL24 from Methylobacillus flagellatus (strain ATCC 51484 / DSM 6875 / VKM B-1610 / KT).